A 325-amino-acid polypeptide reads, in one-letter code: Golgi to ER traffic protein 4 homolog B (325 aa).

2 disordered regions span residues M1–Q22 and S306–D325. A compositionally biased stretch (acidic residues) spans G307–E317.

This sequence belongs to the GET4 family. Component of the bag6/bat3 complex.

Its subcellular location is the cytoplasm. The protein resides in the cytosol. Functionally, as part of a cytosolic protein quality control complex, the bag6/bat3 complex, maintains misfolded and hydrophobic patches-containing proteins in a soluble state and participates in their proper delivery to the endoplasmic reticulum or alternatively can promote their sorting to the proteasome where they undergo degradation. The bag6/bat3 complex is involved in the post-translational delivery of tail-anchored/type II transmembrane proteins to the endoplasmic reticulum membrane. Similarly, the bag6/bat3 complex also functions as a sorting platform for proteins of the secretory pathway that are mislocalized to the cytosol either delivering them to the proteasome for degradation or to the endoplasmic reticulum. The bag6/bat3 complex also plays a role in the endoplasmic reticulum-associated degradation (ERAD), a quality control mechanism that eliminates unwanted proteins of the endoplasmic reticulum through their retrotranslocation to the cytosol and their targeting to the proteasome. It maintains these retrotranslocated proteins in an unfolded yet soluble state condition in the cytosol to ensure their proper delivery to the proteasome. This Xenopus laevis (African clawed frog) protein is Golgi to ER traffic protein 4 homolog B (get4-b).